Here is a 156-residue protein sequence, read N- to C-terminus: Inner membrane protein YlaC (156 aa).

At 1-35 (MTEIQRLLTETIESLNTREKRDNKPRFSISFIRKH) the chain is on the cytoplasmic side. A helical transmembrane segment spans residues 36–56 (PGLFIGMYVAFFATLAVMLQS). Residues 57–58 (ET) are Periplasmic-facing. A helical membrane pass occupies residues 59–79 (LSGSVWLLVVLFILLNGFFFF). At 80-156 (DVYPRYRYED…FTLARAESTS (77 aa)) the chain is on the cytoplasmic side.

The protein localises to the cell inner membrane. The polypeptide is Inner membrane protein YlaC (ylaC) (Escherichia coli (strain K12)).